The primary structure comprises 112 residues: C-type natriuretic peptide 3 (112 aa).

Residues 1–19 (MSLRAFMLCVCLLLQSVGA) form the signal peptide. The propeptide occupies 20–90 (RPASELQNLE…SKRSWGRYKK (71 aa)). Residues 33–67 (QDQLSSTEHPEEDRLDRTREEPQLGGSSSREAADE) are disordered. Residues 40–54 (EHPEEDRLDRTREEP) show a composition bias toward basic and acidic residues. The cysteines at positions 96 and 112 are disulfide-linked.

The protein belongs to the natriuretic peptide family. In terms of tissue distribution, spinal cord, kidney, ovary, heart and spleen, and to a lower extent in brain and liver.

It is found in the secreted. Its function is as follows. Exhibits natriuretic and vasodepressant activity. Has cGMP-stimulating activity. May help to regulate body fluid homeostasis in a variety of aquatic environments. This Oryzias latipes (Japanese rice fish) protein is C-type natriuretic peptide 3.